The following is a 144-amino-acid chain: Small ribosomal subunit protein uS9 (144 aa).

The residue at position 2 (T2) is an N-acetylthreonine. The segment at 124–144 is disordered; it reads RRESKKFGGPGARARYQKSYR.

The protein belongs to the universal ribosomal protein uS9 family.

This chain is Small ribosomal subunit protein uS9 (rps-16), found in Caenorhabditis elegans.